The primary structure comprises 196 residues: Ribosome maturation factor RimP (196 aa).

Residues 176–196 (ETNFDEVSTELETDTPSEGDQ) form a disordered region. Acidic residues predominate over residues 177 to 196 (TNFDEVSTELETDTPSEGDQ).

This sequence belongs to the RimP family.

It is found in the cytoplasm. Its function is as follows. Required for maturation of 30S ribosomal subunits. This is Ribosome maturation factor RimP from Roseobacter denitrificans (strain ATCC 33942 / OCh 114) (Erythrobacter sp. (strain OCh 114)).